Here is an 811-residue protein sequence, read N- to C-terminus: Methionine--tRNA ligase (811 aa).

Positions 11–21 match the 'HIGH' region motif; that stretch reads PYVNNVPHLGN. Cys-142, Cys-145, Cys-155, and Cys-158 together coordinate Zn(2+). The short motif at 344-348 is the 'KMSKS' region element; sequence KFSKS. ATP is bound at residue Lys-347. The disordered stretch occupies residues 606 to 640; it reads GVSVPRTAQMPTGMNKKETDAQQKKEEREMPPPSD. Over residues 620 to 635 the composition is skewed to basic and acidic residues; that stretch reads NKKETDAQQKKEEREM. Residues 648–753 form the tRNA-binding domain; that stretch reads FSERVVLKVA…PWALPGERAT (106 aa).

It belongs to the class-I aminoacyl-tRNA synthetase family. MetG type 1 subfamily. In terms of assembly, homodimer. It depends on Zn(2+) as a cofactor.

It is found in the cytoplasm. The catalysed reaction is tRNA(Met) + L-methionine + ATP = L-methionyl-tRNA(Met) + AMP + diphosphate. Is required not only for elongation of protein synthesis but also for the initiation of all mRNA translation through initiator tRNA(fMet) aminoacylation. The sequence is that of Methionine--tRNA ligase from Treponema pallidum (strain Nichols).